Reading from the N-terminus, the 475-residue chain is L-ornithine N(5)-monooxygenase (475 aa).

FAD is bound by residues 65–73 (ERQPEFGWH) and Gln84. Lys89 lines the substrate pocket. Val150 is an FAD binding site. Position 238–241 (238–241 (GGQS)) interacts with NADP(+). Substrate is bound by residues 277–280 (NEIF) and Asn307. Residue 307–309 (NYG) participates in NADP(+) binding. 446 to 448 (SLL) is a binding site for FAD. Substrate is bound at residue Ser449.

It belongs to the lysine N(6)-hydroxylase/L-ornithine N(5)-oxygenase family. As to quaternary structure, homotetramer. The cofactor is FAD.

It catalyses the reaction L-ornithine + NADPH + O2 = N(5)-hydroxy-L-ornithine + NADP(+) + H2O. The enzyme catalyses L-ornithine + NADH + O2 = N(5)-hydroxy-L-ornithine + NAD(+) + H2O. Its pathway is siderophore biosynthesis. Functionally, L-ornithine N(5)-monooxygenase; part of the gene cluster that mediates the biosynthesis of hydroxamate-containing siderophores that play a critical role in virulence via intracellular iron acquisition during macrophage infection. SID1 catalyzes the conversion of L-ornithine to N(5)-hydroxyornithine, the first step in the biosynthesis of all hydroxamate-containing siderophores. The sequence is that of L-ornithine N(5)-monooxygenase from Ajellomyces capsulatus (Darling's disease fungus).